The following is a 278-amino-acid chain: Large ribosomal subunit protein uL2 (278 aa).

The interval 212–278 (NRHRGIRPQT…IISRKKHKKG (67 aa)) is disordered. Residues 257–278 (YKTRKKKASDKLIISRKKHKKG) show a composition bias toward basic residues.

Belongs to the universal ribosomal protein uL2 family. Part of the 50S ribosomal subunit. Forms a bridge to the 30S subunit in the 70S ribosome.

One of the primary rRNA binding proteins. Required for association of the 30S and 50S subunits to form the 70S ribosome, for tRNA binding and peptide bond formation. It has been suggested to have peptidyltransferase activity; this is somewhat controversial. Makes several contacts with the 16S rRNA in the 70S ribosome. This is Large ribosomal subunit protein uL2 from Helicobacter pylori (strain Shi470).